We begin with the raw amino-acid sequence, 184 residues long: Potassium-transporting ATPase KdpC subunit (184 aa).

Residues 6-26 (TAVLYTIISAVFLGLGYPLIM) form a helical membrane-spanning segment.

It belongs to the KdpC family. The system is composed of three essential subunits: KdpA, KdpB and KdpC.

It localises to the cell inner membrane. Functionally, part of the high-affinity ATP-driven potassium transport (or Kdp) system, which catalyzes the hydrolysis of ATP coupled with the electrogenic transport of potassium into the cytoplasm. This subunit acts as a catalytic chaperone that increases the ATP-binding affinity of the ATP-hydrolyzing subunit KdpB by the formation of a transient KdpB/KdpC/ATP ternary complex. This chain is Potassium-transporting ATPase KdpC subunit, found in Acidobacterium capsulatum (strain ATCC 51196 / DSM 11244 / BCRC 80197 / JCM 7670 / NBRC 15755 / NCIMB 13165 / 161).